Here is a 391-residue protein sequence, read N- to C-terminus: Tyrosinase-like protein phomQ2 (391 aa).

Positions 1-21 (MDNVGCEASSSRDPKGKKAVG) are disordered. The chain crosses the membrane as a helical span at residues 61 to 81 (IRGFICATIIFVVCLGALSYI). Asparagine 97 and asparagine 141 each carry an N-linked (GlcNAc...) asparagine glycan. Cu cation-binding residues include histidine 160 and histidine 169. 3 N-linked (GlcNAc...) asparagine glycosylation sites follow: asparagine 204, asparagine 246, and asparagine 261. The Cu cation site is built by histidine 298 and histidine 324. Residue asparagine 353 is glycosylated (N-linked (GlcNAc...) asparagine).

Belongs to the tyrosinase family. The cofactor is Cu(2+).

Its subcellular location is the membrane. It functions in the pathway mycotoxin biosynthesis. In terms of biological role, tyrosinase-like protein; part of the gene cluster that mediates the biosynthesis of the phomopsins, a group of hexapeptide mycotoxins which infects lupins and causes lupinosis disease in livestock. Within the pathway, phomQ2 is involved in the generation of the common 13-membered macrocycle, possibly by catalyzing the hydroxylation of Tyr. The pathway starts with the processing of the precursor phomA by several endopeptidases including kexin proteases as well as the cluster-specific S41 family peptidase phomP1 and the oligopeptidase phomG to produce 10 identical copies of the hexapeptide Tyr-Val-Ile-Pro-Ile-Asp. After being excised from the precursor peptide, the core peptides are cyclized and modified post-translationally by enzymes encoded within the gene cluster. The timing and order of proteolysis of the phomA precursor and PTMs are still unknown. Two tyrosinase-like enzymes, phomQ1 and phomQ2, catalyze the chlorination and hydroxylation of Tyr, respectively. PhomYb, is proposed to be involved in the construction of the macrocyclic structure. The other 4 ustYa family proteins may be involved in PTMs that generate the unique structure of phomopsin A. PhomYa is required for the hydroxylation of C-beta of Tyr. PhomYc, phomYd, and phomYe are responsible for the biosynthesis of 2,3-dehydroisoleucine (dIle), 2,3-dehydroaspartic acid (dAsp), and 3,4-dehydroproline (dPro), respectively. While dIle formation by phomYc is indispensable for the installation of dAsp by phomYd, the order of the other PTMs have not been elucidated yet. Most of the biosynthetic enzymes likely have broad substrate specificity, and thus, there might be a metabolic grid from a precursor to phomopsin A. The enzyme(s) responsible for the biosynthesis of 3,4-dehydrovaline (dVal) have also not been identified yet. Finally, phomM acts as an S-adenosylmethionine-dependent alpha-N-methyltransferase that catalyzes two successive N-methylation reactions, converting N-desmethyl-phomopsin A to phomopsin A and phomopsin A further to an N,N-dimethylated congener called phomopsin E. The polypeptide is Tyrosinase-like protein phomQ2 (Diaporthe leptostromiformis (Lupinosis disease fungus)).